Reading from the N-terminus, the 397-residue chain is 1-deoxy-D-xylulose 5-phosphate reductoisomerase (397 aa).

Residues Thr17, Gly18, Ser19, Ile20, Ala45, Asn47, and Asn130 each contribute to the NADPH site. Lys131 contacts 1-deoxy-D-xylulose 5-phosphate. Glu132 lines the NADPH pocket. Asp156 contributes to the Mn(2+) binding site. 1-deoxy-D-xylulose 5-phosphate is bound by residues Ser157, Glu158, Ser182, and His205. Glu158 provides a ligand contact to Mn(2+). Gly211 lines the NADPH pocket. Ser218, Asn223, Lys224, and Glu227 together coordinate 1-deoxy-D-xylulose 5-phosphate. Glu227 contacts Mn(2+).

The protein belongs to the DXR family. Mg(2+) serves as cofactor. It depends on Mn(2+) as a cofactor.

The catalysed reaction is 2-C-methyl-D-erythritol 4-phosphate + NADP(+) = 1-deoxy-D-xylulose 5-phosphate + NADPH + H(+). The protein operates within isoprenoid biosynthesis; isopentenyl diphosphate biosynthesis via DXP pathway; isopentenyl diphosphate from 1-deoxy-D-xylulose 5-phosphate: step 1/6. Functionally, catalyzes the NADPH-dependent rearrangement and reduction of 1-deoxy-D-xylulose-5-phosphate (DXP) to 2-C-methyl-D-erythritol 4-phosphate (MEP). This Agrobacterium fabrum (strain C58 / ATCC 33970) (Agrobacterium tumefaciens (strain C58)) protein is 1-deoxy-D-xylulose 5-phosphate reductoisomerase.